Here is a 102-residue protein sequence, read N- to C-terminus: DNCESNADCHEGLECSNRKCLISFNSDETCSTGWDCVPGVWCRTHGSEPGKCDEDHRCPSDGVCTNPGTECDEDNICGYKEGEPCYGPCRKGLSCRQGTCLQ.

Post-translationally, contains 8 disulfide bonds. In terms of tissue distribution, expressed by the venom duct.

Its subcellular location is the secreted. Its function is as follows. Acts as a neurotoxin by inhibiting an ion channel. The protein is Turripeptide OL55-like of Lophiotoma acuta (Marbled turris).